A 101-amino-acid chain; its full sequence is HssA/B-like protein 40 (101 aa).

The segment at 1 to 26 (MTLFSSISSMSTSMSGSKSSISSFGS) is disordered.

Belongs to the hssA/B family.

This Dictyostelium discoideum (Social amoeba) protein is HssA/B-like protein 40 (hssl40).